The sequence spans 241 residues: 1-(5-phosphoribosyl)-5-[(5-phosphoribosylamino)methylideneamino] imidazole-4-carboxamide isomerase (241 aa).

Catalysis depends on Asp10, which acts as the Proton acceptor. Asp131 (proton donor) is an active-site residue.

This sequence belongs to the HisA/HisF family.

Its subcellular location is the cytoplasm. The enzyme catalyses 1-(5-phospho-beta-D-ribosyl)-5-[(5-phospho-beta-D-ribosylamino)methylideneamino]imidazole-4-carboxamide = 5-[(5-phospho-1-deoxy-D-ribulos-1-ylimino)methylamino]-1-(5-phospho-beta-D-ribosyl)imidazole-4-carboxamide. It participates in amino-acid biosynthesis; L-histidine biosynthesis; L-histidine from 5-phospho-alpha-D-ribose 1-diphosphate: step 4/9. The chain is 1-(5-phosphoribosyl)-5-[(5-phosphoribosylamino)methylideneamino] imidazole-4-carboxamide isomerase from Bifidobacterium adolescentis (strain ATCC 15703 / DSM 20083 / NCTC 11814 / E194a).